A 498-amino-acid chain; its full sequence is NAD(P)H-quinone oxidoreductase chain 4, chloroplastic (498 aa).

14 consecutive transmembrane segments (helical) span residues 4–24 (FPWLTTVVVLPIVGGSLIVLF), 37–57 (YCICFIDLLLIAYVFCYHFEL), 80–100 (FGIDGLSLGPILLTGFITTLA), 112–129 (KLFYFLMLAMYSGQLGTF), 134–154 (ILLFFIMWELELIPVYLLLSM), 167–187 (FILYTAGSSVFLLLGILGMSL), 208–228 (ALEIIFYMGFLIAFAVKSPII), 242–262 (HYSTCMLLAGILLKMGAYGLV), 272–292 (AHSIFCPWLMLLGSIQIIYAA), 305–325 (IAYSSVSHMGFLILGIGSISE), 330–350 (GAILQIISHGFIGAALFFLAG), 386–406 (LALPGMSGFVAELIVLLGIIT), 416–436 (ILITFVTAIGMILTPIYSLSI), and 463–483 (FISISILIPVISIGIYPDFIF).

Belongs to the complex I subunit 4 family.

It localises to the plastid. Its subcellular location is the chloroplast thylakoid membrane. The catalysed reaction is a plastoquinone + NADH + (n+1) H(+)(in) = a plastoquinol + NAD(+) + n H(+)(out). It catalyses the reaction a plastoquinone + NADPH + (n+1) H(+)(in) = a plastoquinol + NADP(+) + n H(+)(out). This is NAD(P)H-quinone oxidoreductase chain 4, chloroplastic from Phaseolus vulgaris (Kidney bean).